Here is a 253-residue protein sequence, read N- to C-terminus: Triosephosphate isomerase (253 aa).

8–10 (NWK) contributes to the substrate binding site. Histidine 93 serves as the catalytic Electrophile. Catalysis depends on glutamate 165, which acts as the Proton acceptor. Substrate contacts are provided by residues glycine 171, serine 210, and 231 to 232 (GG).

This sequence belongs to the triosephosphate isomerase family. In terms of assembly, homodimer.

It is found in the cytoplasm. The enzyme catalyses D-glyceraldehyde 3-phosphate = dihydroxyacetone phosphate. The protein operates within carbohydrate biosynthesis; gluconeogenesis. It participates in carbohydrate degradation; glycolysis; D-glyceraldehyde 3-phosphate from glycerone phosphate: step 1/1. Functionally, involved in the gluconeogenesis. Catalyzes stereospecifically the conversion of dihydroxyacetone phosphate (DHAP) to D-glyceraldehyde-3-phosphate (G3P). The sequence is that of Triosephosphate isomerase from Francisella tularensis subsp. novicida (strain U112).